The following is a 297-amino-acid chain: MKSRTIWTIILGALLVCCIAVAYTLTKSQAGASSSGESIATIGGKSVTREEWLKEMEDQYGKSTLEDMINVRVVEQLAKKNKLKISKSEVDREFLLIKAVNNSFYEDEHTTEKEWKDQIRYNILLEDLLTRDIDISNKELESFYNKNKELYQFDDSYRIRHIVVKDEEEAREVLKELKGGSSFEAVAAERSTDRYTSPYGGDLGFVTEASDNIPSAYIEEAKTLKEDEWSQEPIKVSNGYAIIQLKEKLKARTFSFDEVKDQIRRQIAMDQLGDKATVKTLWKEADVSWFYGEKSTK.

The N-terminal stretch at Met-1–Ala-32 is a signal peptide. Residues Asp-154–Glu-247 form the PpiC domain.

The catalysed reaction is [protein]-peptidylproline (omega=180) = [protein]-peptidylproline (omega=0). The sequence is that of Putative peptidyl-prolyl cis-trans isomerase YacD (yacD) from Bacillus subtilis (strain 168).